The following is a 241-amino-acid chain: MEKRGESLDLGVRCKRGEERDRRPCWKPSRPGAARGGRGLWTVGGGGSPTETAESQQLGKPPEFWVSAHPGWLQVSCAHRASRWDASRWHPLQRFFARRGVRRPNPSVPSPLPKPPVPSAGSCEPLAPPPTSASGASRSWVTQTLAEAGAYRGCRPAPGSAAGWPRSDRRARLPRKASKPCSPALPSLAACCPQGFLRSGTKRVMCKVLGPGAGVRGTAVECSEQAGVWAHCRPQLTATFS.

3 disordered regions span residues 19–59 (ERDR…QQLG), 101–139 (VRRP…ASRS), and 152–182 (RGCR…KPCS). The segment covering 34–48 (ARGGRGLWTVGGGGS) has biased composition (gly residues). Over residues 49–58 (PTETAESQQL) the composition is skewed to polar residues. The span at 106-118 (PSVPSPLPKPPVP) shows a compositional bias: pro residues.

This is an uncharacterized protein from Homo sapiens (Human).